The following is a 469-amino-acid chain: Glutamine synthetase (469 aa).

In terms of domain architecture, GS beta-grasp spans 14 to 98 (NDVKYVDLRF…VVCDVLEPTT (85 aa)). A GS catalytic domain is found at 106-469 (PRGIAKKAMA…PVEFEMYYSV (364 aa)). 2 residues coordinate Mg(2+): Glu131 and Glu133. Position 209 (Glu209) interacts with ATP. 2 residues coordinate Mg(2+): Glu214 and Glu221. L-glutamate is bound by residues 265–266 (NG) and Gly266. Position 270 (His270) interacts with Mg(2+). ATP is bound by residues 272–274 (HQS) and Ser274. 3 residues coordinate L-glutamate: Arg322, Glu328, and Arg340. Arg340, Arg345, and Lys353 together coordinate ATP. Glu358 contributes to the Mg(2+) binding site. An L-glutamate-binding site is contributed by Arg360. Tyr398 carries the post-translational modification O-AMP-tyrosine.

It belongs to the glutamine synthetase family. As to quaternary structure, oligomer of 12 subunits arranged in the form of two hexameric ring. Mg(2+) serves as cofactor.

The protein resides in the cytoplasm. The catalysed reaction is L-glutamate + NH4(+) + ATP = L-glutamine + ADP + phosphate + H(+). Its activity is regulated as follows. The activity of this enzyme could be controlled by adenylation under conditions of abundant glutamine. Its function is as follows. Catalyzes the ATP-dependent biosynthesis of glutamine from glutamate and ammonia. This chain is Glutamine synthetase, found in Azorhizobium caulinodans (strain ATCC 43989 / DSM 5975 / JCM 20966 / LMG 6465 / NBRC 14845 / NCIMB 13405 / ORS 571).